The chain runs to 118 residues: DNA-binding protein M164_1799 (118 aa).

It belongs to the PDCD5 family.

This is DNA-binding protein M164_1799 from Saccharolobus islandicus (strain M.16.4 / Kamchatka #3) (Sulfolobus islandicus).